The primary structure comprises 218 residues: Small ribosomal subunit protein uS3c (218 aa).

Residues 39–120 enclose the KH type-2 domain; sequence IRNFMNKELL…IITCKVVGVT (82 aa).

It belongs to the universal ribosomal protein uS3 family. In terms of assembly, part of the 30S ribosomal subunit.

The protein localises to the plastid. Its subcellular location is the chloroplast. This is Small ribosomal subunit protein uS3c (rps3) from Euglena gracilis.